We begin with the raw amino-acid sequence, 125 residues long: Large ribosomal subunit protein bL12 (125 aa).

The protein belongs to the bacterial ribosomal protein bL12 family. In terms of assembly, homodimer. Part of the ribosomal stalk of the 50S ribosomal subunit. Forms a multimeric L10(L12)X complex, where L10 forms an elongated spine to which 2 to 4 L12 dimers bind in a sequential fashion. Binds GTP-bound translation factors.

In terms of biological role, forms part of the ribosomal stalk which helps the ribosome interact with GTP-bound translation factors. Is thus essential for accurate translation. This Thermus thermophilus (strain ATCC BAA-163 / DSM 7039 / HB27) protein is Large ribosomal subunit protein bL12.